The primary structure comprises 260 residues: Ribonuclease HII (260 aa).

Residues glutamate 75–lysine 260 enclose the RNase H type-2 domain. A divalent metal cation is bound by residues aspartate 81, glutamate 82, and aspartate 173.

This sequence belongs to the RNase HII family. Requires Mn(2+) as cofactor. Mg(2+) serves as cofactor.

It localises to the cytoplasm. It catalyses the reaction Endonucleolytic cleavage to 5'-phosphomonoester.. Functionally, endonuclease that specifically degrades the RNA of RNA-DNA hybrids. This chain is Ribonuclease HII, found in Streptococcus thermophilus (strain CNRZ 1066).